Consider the following 127-residue polypeptide: Protein yippee-like 4 (127 aa).

Residues 27–124 (RTYSCVHCRA…IEMSHMVKDN (98 aa)) enclose the Yippee domain. 4 residues coordinate Zn(2+): Cys-31, Cys-34, Cys-87, and Cys-90. 2 positions are modified to phosphothreonine: Thr-92 and Thr-93. Residue Tyr-98 is modified to Phosphotyrosine.

Belongs to the yippee family.

The protein localises to the nucleus. It localises to the nucleolus. This chain is Protein yippee-like 4 (YPEL4), found in Chlorocebus aethiops (Green monkey).